A 147-amino-acid polypeptide reads, in one-letter code: MRTYSPKPGDVTRQWHIIDAQDIVLGRLATTAANLLRGKHKAIYAPHMDMGDFVIIINADKVHLSGNKKTQKMAYRHSGFPGGLRSVRYDELLAKNPEKAVEKAIKGMIPKNTLGRQMLSKLKVYAGDQHPHAAQQPVPFEITQVAQ.

The protein belongs to the universal ribosomal protein uL13 family. As to quaternary structure, part of the 50S ribosomal subunit.

This protein is one of the early assembly proteins of the 50S ribosomal subunit, although it is not seen to bind rRNA by itself. It is important during the early stages of 50S assembly. The sequence is that of Large ribosomal subunit protein uL13 from Streptomyces griseus subsp. griseus (strain JCM 4626 / CBS 651.72 / NBRC 13350 / KCC S-0626 / ISP 5235).